Here is a 374-residue protein sequence, read N- to C-terminus: Probable neutral protease 2 homolog TRV_05367 (374 aa).

The signal sequence occupies residues 1 to 19; it reads MQVIVALAALGSLAAPALG. Residues 20–189 constitute a propeptide that is removed on maturation; that stretch reads FSIPRGVPVS…RGPLTRINKR (170 aa). Cystine bridges form between C197–C267 and C274–C292. H317 contributes to the Zn(2+) binding site. The active site involves E318. 2 residues coordinate Zn(2+): H321 and D332.

Belongs to the peptidase M35 family. It depends on Zn(2+) as a cofactor.

The protein localises to the secreted. The catalysed reaction is Preferential cleavage of bonds with hydrophobic residues in P1'. Also 3-Asn-|-Gln-4 and 8-Gly-|-Ser-9 bonds in insulin B chain.. Probable secreted metalloprotease that shows high activities on basic nuclear substrates such as histone and protamine. May be involved in virulence. This chain is Probable neutral protease 2 homolog TRV_05367, found in Trichophyton verrucosum (strain HKI 0517).